Here is a 380-residue protein sequence, read N- to C-terminus: Cytochrome b (380 aa).

The next 4 membrane-spanning stretches (helical) occupy residues Phe-34 to Met-54, Trp-78 to Ile-99, Trp-114 to Leu-134, and Phe-179 to Thr-199. Residues His-84 and His-98 each contribute to the heme b site. Residues His-183 and His-197 each contribute to the heme b site. His-202 serves as a coordination point for a ubiquinone. A run of 4 helical transmembrane segments spans residues Leu-227 to Thr-247, Leu-289 to His-309, Leu-321 to Ser-341, and Phe-348 to Pro-368.

It belongs to the cytochrome b family. In terms of assembly, the cytochrome bc1 complex contains 11 subunits: 3 respiratory subunits (MT-CYB, CYC1 and UQCRFS1), 2 core proteins (UQCRC1 and UQCRC2) and 6 low-molecular weight proteins (UQCRH/QCR6, UQCRB/QCR7, UQCRQ/QCR8, UQCR10/QCR9, UQCR11/QCR10 and a cleavage product of UQCRFS1). This cytochrome bc1 complex then forms a dimer. Heme b is required as a cofactor.

It is found in the mitochondrion inner membrane. Component of the ubiquinol-cytochrome c reductase complex (complex III or cytochrome b-c1 complex) that is part of the mitochondrial respiratory chain. The b-c1 complex mediates electron transfer from ubiquinol to cytochrome c. Contributes to the generation of a proton gradient across the mitochondrial membrane that is then used for ATP synthesis. The chain is Cytochrome b (MT-CYB) from Herpetotheres cachinnans (Laughing falcon).